The following is a 177-amino-acid chain: Ribosome rescue factor SmrB (177 aa).

The region spanning 98–173 (LDMHGMKQDE…GAGAILVLLS (76 aa)) is the Smr domain.

It belongs to the SmrB family. As to quaternary structure, associates with collided ribosomes, but not with correctly translating polysomes.

In terms of biological role, acts as a ribosome collision sensor. Detects stalled/collided disomes (pairs of ribosomes where the leading ribosome is stalled and a second ribosome has collided with it) and endonucleolytically cleaves mRNA at the 5' boundary of the stalled ribosome. Stalled/collided disomes form a new interface (primarily via the 30S subunits) that binds SmrB. Cleaved mRNA becomes available for tmRNA ligation, leading to ribosomal subunit dissociation and rescue of stalled ribosomes. The polypeptide is Ribosome rescue factor SmrB (Aliivibrio fischeri (strain ATCC 700601 / ES114) (Vibrio fischeri)).